The chain runs to 678 residues: Protein MALE DISCOVERER 2 (678 aa).

An N-terminal signal peptide occupies residues 1–25 (MMGCGFHFPWFFFLIIGLQAPLSLS). The Extracellular portion of the chain corresponds to 26–323 (LTSQGSALLK…SKGSKHVWLY (298 aa)). An N-linked (GlcNAc...) asparagine glycan is attached at N52. LRR repeat units lie at residues 71–94 (KVQI…SQLS), 95–117 (DLRS…YGSF), 119–141 (NLEV…LSNG), and 143–164 (SLKH…KIVR). Positions 247–314 (LAAEPAPSAP…KNQPQDNKQS (68 aa)) are disordered. Over residues 296-311 (KGSTSPDISKNQPQDN) the composition is skewed to polar residues. A helical membrane pass occupies residues 324–344 (VVIAVASFVGLLIIVAVIFFC). Residues 345–678 (RKRAVKSIGP…ELEILSSEAT (334 aa)) lie on the Cytoplasmic side of the membrane. The Protein kinase domain occupies 346-651 (KRAVKSIGPW…DVAEQLKQVI (306 aa)).

The protein belongs to the protein kinase superfamily. Ser/Thr protein kinase family. In terms of tissue distribution, expressed in pollen tubes and seedlings.

The protein localises to the endomembrane system. It catalyses the reaction L-seryl-[protein] + ATP = O-phospho-L-seryl-[protein] + ADP + H(+). The enzyme catalyses L-threonyl-[protein] + ATP = O-phospho-L-threonyl-[protein] + ADP + H(+). In terms of biological role, involved in the pollen tube perception of the female signal by binding an unidentified female attractant. May be involved in the regulation of root hairs development. The polypeptide is Protein MALE DISCOVERER 2 (MDIS2) (Arabidopsis thaliana (Mouse-ear cress)).